Reading from the N-terminus, the 268-residue chain is MQAMAELDDFFAKKDKKKSKNKTKFVTADEMVKNLEDGTKREVVKPKKPEAAAGGVAVVGENENSGTKVPESAPPVEEEWKEFEEEQRKDYSGLKIGQLSTITAQESAESRATRVPTAQDGGNYDEDDEDSNGYDNADVNKERVGHGPWKKVVPAEEVMQIPVPVEVEKPSSKTYVSPALRYSQQAGSGLGGGTVGGALRPRRAAPDITNTEFFPTLSAARPEEQRKKKNEPAFEEVRHGSRFQRVQESTAAPVAASNRFQSLDDEAS.

Basic and acidic residues predominate over residues 40–50 (KREVVKPKKPE). Disordered stretches follow at residues 40–145 (KREV…ERVG) and 184–268 (QQAG…DEAS). Low complexity predominate over residues 51–61 (AAAGGVAVVGE). Positions 76-85 (VEEEWKEFEE) are enriched in acidic residues. A compositionally biased stretch (polar residues) spans 98-107 (QLSTITAQES). The span at 123-132 (NYDEDDEDSN) shows a compositional bias: acidic residues. Residues 221–239 (RPEEQRKKKNEPAFEEVRH) are compositionally biased toward basic and acidic residues.

Belongs to the CDV3 family.

The protein is Protein CDV3 homolog of Drosophila yakuba (Fruit fly).